The sequence spans 390 residues: Na(+)/H(+) antiporter NhaA (390 aa).

11 helical membrane passes run 13 to 33, 61 to 81, 99 to 119, 129 to 149, 158 to 178, 181 to 201, 209 to 229, 259 to 279, 297 to 317, 330 to 350, and 367 to 387; these read FQLE…ALVI, LSVH…FVTL, LLPI…YVFI, GWAI…SLLG, VFLT…IAFF, GDLS…LLTL, FIPY…SGIH, AISP…NAGV, ILLG…FIAV, WLSL…SLFV, and IGVL…LLYA.

This sequence belongs to the NhaA Na(+)/H(+) (TC 2.A.33) antiporter family.

The protein localises to the cell inner membrane. The enzyme catalyses Na(+)(in) + 2 H(+)(out) = Na(+)(out) + 2 H(+)(in). Functionally, na(+)/H(+) antiporter that extrudes sodium in exchange for external protons. This is Na(+)/H(+) antiporter NhaA from Pelagibacter ubique (strain HTCC1062).